The following is a 286-amino-acid chain: MKTFVLFVILLCLTFLSISKSETCPFSQSLVSGASATYYTDPNAGNCGYENLMGPLGPGNLFIAALGPNLYNNGKNCGQCFNISSPYTNRSVVIMATDSCPDSGYCQRSSHFDLSTQAFDVLGAQSIGVLEGLTYYKVPCGVNGNVKIMMKDGSNDYWTAFLIYNSKVTIKDVSVKITGKSTYTSLTQSSYNYWISPNMVPGSFDVRIESVGGEFIYITIPKVESRKQYETSSQFSVDGCVGTPSGPSGGLGSPSTGASIGTPSDASSLTLYALFSLTILFLVMLN.

An N-terminal signal peptide occupies residues 1–21; it reads MKTFVLFVILLCLTFLSISKS. The Extracellular portion of the chain corresponds to 22 to 265; it reads ETCPFSQSLV…TGASIGTPSD (244 aa). The 102-residue stretch at 44–145 folds into the Expansin-like EG45 domain; that stretch reads AGNCGYENLM…YKVPCGVNGN (102 aa). 2 disulfide bridges follow: Cys-47/Cys-77 and Cys-80/Cys-140. N-linked (GlcNAc...) asparagine glycans are attached at residues Asn-82 and Asn-89. Residues 266–286 traverse the membrane as a helical segment; sequence ASSLTLYALFSLTILFLVMLN.

It belongs to the expansin family. Expansin A subfamily.

It localises to the membrane. Functionally, may serve to lubricate the movement of the cellulose microfibrils during cell growth and wall extension and/or they may serve to maintain the fluid state of the slug cell wall. This is Expansin-like protein 1 (expl1) from Dictyostelium discoideum (Social amoeba).